The primary structure comprises 256 residues: 5'-nucleotidase SurE (256 aa).

A divalent metal cation is bound by residues aspartate 8, aspartate 9, serine 40, and asparagine 92.

The protein belongs to the SurE nucleotidase family. The cofactor is a divalent metal cation.

The protein resides in the cytoplasm. The enzyme catalyses a ribonucleoside 5'-phosphate + H2O = a ribonucleoside + phosphate. Its function is as follows. Nucleotidase that shows phosphatase activity on nucleoside 5'-monophosphates. The sequence is that of 5'-nucleotidase SurE from Allorhizobium ampelinum (strain ATCC BAA-846 / DSM 112012 / S4) (Agrobacterium vitis (strain S4)).